The following is a 600-amino-acid chain: Single-strand DNA endonuclease 1 (600 aa).

An N-domain region spans residues 1–97; the sequence is MGVKYLWDVL…KRRLKARFEI (97 aa). Positions 2–97 are XPG-N domain; that stretch reads GVKYLWDVLE…KRRLKARFEI (96 aa). 7 residues coordinate Mg(2+): aspartate 30, aspartate 76, glutamate 142, glutamate 144, aspartate 163, aspartate 165, and aspartate 215. The interval 130-215 is XPG-I domain; sequence STLGILCLDG…IALALLLGSD (86 aa). 2 I-domain regions span residues 130–218 and 130–219; these read STLG…DYSQ and STLG…YSQG. The interval 215–353 is 5'-3' exonuclease domain; sequence DYSQGVRGLR…ILPKVAERNL (139 aa). Residues 433 to 458 are disordered; sequence MAAKKKKPKPKQKQKETSSPTKSSSL. The segment covering 435-444 has biased composition (basic residues); that stretch reads AKKKKPKPKQ.

The protein belongs to the XPG/RAD2 endonuclease family. GEN subfamily. The cofactor is Mg(2+).

It localises to the nucleus. Its function is as follows. Endonuclease which cleaves flap structures at the junction between single-stranded DNA and double-stranded DNA with a specific cleavage site in the 5' overhang strand exactly one nucleotide 3' of the branch point. Structure- and sequence-specific nuclease that resolves holliday junctions (HJs) by symmetrically oriented incisions in two opposing strands near the junction point, thus leading to ligatable products; HJs are physical links between homologous DNA molecules that arise as central intermediary structures during homologous recombination and repair in meiotic and somatic cells. Structure-specific nuclease with 5'-flap endonuclease activity, preferentially cleaving static flaps 5' overhang strand exactly one nucleotide in the 3' direction of the branch point and, to lower extent, on the two neighboring positions. Also able to cleave double-stranded flap strand 1 one nucleotide in the 3' direction of the branch point. Together with MUS81, essential for the resolution of toxic replication structures to ensure genome stability, and to maintain telomere integrity and replication. This is Single-strand DNA endonuclease 1 from Arabidopsis thaliana (Mouse-ear cress).